The sequence spans 333 residues: Eukaryotic translation initiation factor 2 subunit 2 (333 aa).

Disordered stretches follow at residues 1–119 (MSGD…DLDI) and 139–164 (ILEK…NQTG). Ser2 carries the N-acetylserine modification. Residues Ser2 and Ser13 each carry the phosphoserine modification. A compositionally biased stretch (basic residues) spans 13–22 (SKKKKKKKKP). Phosphothreonine is present on residues Thr31 and Thr36. Over residues 40-51 (ETKEVEPEPTED) the composition is skewed to basic and acidic residues. Ser67 is subject to Phosphoserine. Over residues 96 to 105 (EGVKDLKIES) the composition is skewed to basic and acidic residues. A Glycyl lysine isopeptide (Lys-Gly) (interchain with G-Cter in SUMO2) cross-link involves residue Lys102. Ser105 carries the phosphoserine modification. 2 stretches are compositionally biased toward acidic residues: residues 106 to 118 (DVQE…DDLD) and 139 to 149 (ILEKDEALEDE). A Phosphothreonine modification is found at Thr111. A phosphoserine mark is found at Ser158 and Ser218. 2 positions are modified to N6-acetyllysine: Lys265 and Lys293. The C4-type zinc-finger motif lies at 281–305 (CHTCRSPDTILQKDTRLYFLQCETC).

This sequence belongs to the eIF-2-beta/eIF-5 family. As to quaternary structure, eukaryotic translation initiation factor 2 eIF2 is a heterotrimeric complex composed of an alpha (EIF2S1), a beta (EIF2S2) and a gamma (EIF2S3) chain. eIF2 is member of the 43S pre-initiation complex (43S PIC). eIF2 forms a complex with at least CELF1/CUGBP1, CALR, CALR3, EIF2S1, EIF2S2, HSP90B1 and HSPA5. Interacts with BZW2/5MP1. Interacts with EIF5.

Its subcellular location is the cytoplasm. It localises to the cytosol. In terms of biological role, component of the eIF2 complex that functions in the early steps of protein synthesis by forming a ternary complex with GTP and initiator tRNA. This complex binds to a 40S ribosomal subunit, followed by mRNA binding to form the 43S pre-initiation complex (43S PIC). Junction of the 60S ribosomal subunit to form the 80S initiation complex is preceded by hydrolysis of the GTP bound to eIF2 and release of an eIF2-GDP binary complex. In order for eIF2 to recycle and catalyze another round of initiation, the GDP bound to eIF2 must exchange with GTP by way of a reaction catalyzed by eIF2B. In Pongo abelii (Sumatran orangutan), this protein is Eukaryotic translation initiation factor 2 subunit 2 (EIF2S2).